The following is a 62-amino-acid chain: Large ribosomal subunit protein bL28 (62 aa).

It belongs to the bacterial ribosomal protein bL28 family.

The sequence is that of Large ribosomal subunit protein bL28 from Clostridioides difficile (strain 630) (Peptoclostridium difficile).